Consider the following 145-residue polypeptide: MYPAHLLVLLAVCVSLLGASDMPPQPLNLVQFSNMIQCANHGRRPTSNYMDYGCYCGKGGSGTPVDELDRCCKIHDDCYGEAEKSQKCAPYWTWYTWKCGSDGPQCDDSETGSRRFVCGYDATAAKCFAKAPYNKENYNIETRCQ.

The N-terminal stretch at 1–19 (MYPAHLLVLLAVCVSLLGA) is a signal peptide. A propeptide spanning residues 20–27 (SDMPPQPL) is cleaved from the precursor. Disulfide bonds link Cys-38–Cys-99, Cys-54–Cys-144, Cys-56–Cys-72, Cys-71–Cys-127, and Cys-106–Cys-118. Tyr-55, Gly-57, and Gly-59 together coordinate Ca(2+). His-75 is a catalytic residue. Asp-76 contacts Ca(2+). Asp-121 is an active-site residue.

Belongs to the phospholipase A2 family. Group I subfamily. D49 sub-subfamily. Ca(2+) serves as cofactor. This enzyme lacks two of the seven disulfide bonds found in similar PLA2 proteins. Expressed by the venom gland.

It localises to the secreted. It catalyses the reaction a 1,2-diacyl-sn-glycero-3-phosphocholine + H2O = a 1-acyl-sn-glycero-3-phosphocholine + a fatty acid + H(+). In terms of biological role, snake venom phospholipase A2 (PLA2) that inhibits collagen-induced platelet aggregation. PLA2 catalyzes the calcium-dependent hydrolysis of the 2-acyl groups in 3-sn-phosphoglycerides. This chain is Acidic phospholipase A2 S1-11, found in Austrelaps superbus (Lowland copperhead snake).